Consider the following 263-residue polypeptide: Small ribosomal subunit protein eS1 (263 aa).

Residues 235 to 254 (HGEGGGGKREAGDKSERPEG) show a composition bias toward basic and acidic residues. Positions 235–263 (HGEGGGGKREAGDKSERPEGYEPPVQESV) are disordered.

The protein belongs to the eukaryotic ribosomal protein eS1 family. As to quaternary structure, component of the small ribosomal subunit. Mature ribosomes consist of a small (40S) and a large (60S) subunit. The 40S subunit contains about 33 different proteins and 1 molecule of RNA (18S). The 60S subunit contains about 49 different proteins and 3 molecules of RNA (28S, 5.8S and 5S).

It localises to the cytoplasm. The polypeptide is Small ribosomal subunit protein eS1 (Bombyx mandarina (Wild silk moth)).